The following is a 354-amino-acid chain: MASYDKISDGWYRVCPKRSSNRALITVKLPFSTLFRLKPMTDITPFANRLGKNIKHLMKWAKRNGIEAWRIYDRDIPQFPFAADVYGDRIHLQEYDTGWLMRPEEYEAWLAEVLEAVAFVTGFAPEQIRLKRRERQKGLQQYEKTGKAGDDFVITENGRKFWVNLDKYLDTGLFLDHRNTRKKVGETAAGKRFLNLFSYTGSFTVYAATGGAASSETVDLSNTYLDWAKRNFELNGIDTERHKIVRADVFQYLQTAYGEGRRFDLIVMDPPSFSNSKKMSDILDIQRDHKKLIDGAVKLLASDGILYFSNNLRSFVLDDLVSEQYAVKDISKQSVPEDFRNKKIHRCWEIRHKS.

This sequence belongs to the methyltransferase superfamily.

It localises to the cytoplasm. The enzyme catalyses guanosine(2069) in 23S rRNA + S-adenosyl-L-methionine = N(2)-methylguanosine(2069) in 23S rRNA + S-adenosyl-L-homocysteine + H(+). Functionally, specifically methylates the guanine in position 2069 (m7G2069) of 23S rRNA. The polypeptide is Ribosomal RNA large subunit methyltransferase K (rlmK) (Neisseria meningitidis serogroup B (strain ATCC BAA-335 / MC58)).